The following is a 360-amino-acid chain: DNA replication and repair protein RecF (360 aa).

ATP is bound at residue 30–37 (GDNAQGKT).

The protein belongs to the RecF family.

It localises to the cytoplasm. In terms of biological role, the RecF protein is involved in DNA metabolism; it is required for DNA replication and normal SOS inducibility. RecF binds preferentially to single-stranded, linear DNA. It also seems to bind ATP. The protein is DNA replication and repair protein RecF of Lachnoclostridium phytofermentans (strain ATCC 700394 / DSM 18823 / ISDg) (Clostridium phytofermentans).